The sequence spans 459 residues: MAQKYFGTDGIRGKANVFPMTPDFAMKVGMAVGVLFRSQRQSRRVVIGKDTRLSGYMLENALVSGFTAAGMEAFLLGPVPTPAVAMLCRSLRADLGVMISASHNPFYDNGIKLFGPDGFKLSDEIEKKIEQLIDTDLSKSLASCAEIGYAKRVEGDIYRYIEYAKRTLPRDVRLDALRIVVDCANGAAYKAAPRALWELGAEVFAINDAPNGTNINQKCGSTDLASLKQKVHEVRADVGIALDGDGDRVLIVDEKAQTVDGDQLIAVIAEHWHKTGRLQGNGVVTTIMSNLGLERFLNRKGLELVRTNVGDRYVVDAMRQKGYNIGGEASGHIVLSDFGTTGDGLVAALQILACMQESQSSMSHLCKRFEPVPQILKNVTIKNKNVLKKNQVKTAIDQATQRLGNEARLVIRASGTEPVIRIMGEGDEREVLDAVVAEMVDVIAHHDALSKVGASLEGS.

The active-site Phosphoserine intermediate is S102. 4 residues coordinate Mg(2+): S102, D243, D245, and D247. A Phosphoserine modification is found at S102.

Belongs to the phosphohexose mutase family. Mg(2+) serves as cofactor. In terms of processing, activated by phosphorylation.

It carries out the reaction alpha-D-glucosamine 1-phosphate = D-glucosamine 6-phosphate. Its function is as follows. Catalyzes the conversion of glucosamine-6-phosphate to glucosamine-1-phosphate. The polypeptide is Phosphoglucosamine mutase (Bartonella quintana (strain Toulouse) (Rochalimaea quintana)).